The following is a 272-amino-acid chain: Cytochrome c oxidase subunit 3 (272 aa).

7 consecutive transmembrane segments (helical) span residues 20–40 (PWPL…VLFM), 45–65 (GGGE…FTWW), 89–109 (GMIL…WAFF), 128–148 (VVAI…LSSG), 166–186 (AMQG…MQGF), 204–224 (FYMA…FLFI), and 248–268 (YWHF…WWGF).

Belongs to the cytochrome c oxidase subunit 3 family. Component of the cytochrome c oxidase (complex IV, CIV), a multisubunit enzyme composed of a catalytic core of 3 subunits and several supernumerary subunits. The complex exists as a monomer or a dimer and forms supercomplexes (SCs) in the inner mitochondrial membrane with ubiquinol-cytochrome c oxidoreductase (cytochrome b-c1 complex, complex III, CIII).

The protein localises to the mitochondrion inner membrane. The enzyme catalyses 4 Fe(II)-[cytochrome c] + O2 + 8 H(+)(in) = 4 Fe(III)-[cytochrome c] + 2 H2O + 4 H(+)(out). Its function is as follows. Component of the cytochrome c oxidase, the last enzyme in the mitochondrial electron transport chain which drives oxidative phosphorylation. The respiratory chain contains 3 multisubunit complexes succinate dehydrogenase (complex II, CII), ubiquinol-cytochrome c oxidoreductase (cytochrome b-c1 complex, complex III, CIII) and cytochrome c oxidase (complex IV, CIV), that cooperate to transfer electrons derived from NADH and succinate to molecular oxygen, creating an electrochemical gradient over the inner membrane that drives transmembrane transport and the ATP synthase. Cytochrome c oxidase is the component of the respiratory chain that catalyzes the reduction of oxygen to water. Electrons originating from reduced cytochrome c in the intermembrane space (IMS) are transferred via the dinuclear copper A center (CU(A)) of subunit 2 and heme A of subunit 1 to the active site in subunit 1, a binuclear center (BNC) formed by heme A3 and copper B (CU(B)). The BNC reduces molecular oxygen to 2 water molecules using 4 electrons from cytochrome c in the IMS and 4 protons from the mitochondrial matrix. In Pylaiella littoralis (Seaweed), this protein is Cytochrome c oxidase subunit 3 (COX3).